A 156-amino-acid polypeptide reads, in one-letter code: Calmodulin (156 aa).

An N-acetylserine modification is found at S2. EF-hand domains lie at 15–50, 51–86, 88–123, and 124–156; these read EQIAEFKEAFSLFDKDGDGTITTKELGTVMRSLGQN, PTEAELQDMINEVDADGNGTIDFPEFLTMMARKMKD, DSEEEIREAFRVFDKDGNGFISAAELRHVMTNLGEK, and LTDEEVDEMIREADIDGDGQVNYEEFVTMMTSK. 14 residues coordinate Ca(2+): D28, D30, D32, T34, E39, D64, D66, N68, T70, E75, D101, D103, N105, and E112. At K123 the chain carries N6,N6,N6-trimethyllysine. Ca(2+)-binding residues include D137, D139, D141, Q143, and E148.

This sequence belongs to the calmodulin family.

Calmodulin mediates the control of a large number of enzymes, ion channels and other proteins by Ca(2+). Among the enzymes to be stimulated by the calmodulin-Ca(2+) complex are a number of protein kinases and phosphatases. The protein is Calmodulin of Strongylocentrotus intermedius (Sea urchin).